An 861-amino-acid chain; its full sequence is MELHLTPRLKQRPAQAAACERYVDRLPVSSELRSELLADPSMPASAGISIDPRDAQAAIEQLQSRLSAREPAKGETPEPGGSTYGSVGRRFSLAYGNPQVAGEPLLKRRPDGTVHVDTGPEPQRSSMVPRQWPPHIVTGWVRNTWRRMLGRPPVPETWDTLHDGPDAEGKWHPAGSHRRWFLLGLVVAQTTLATYFMTKVLPYHGADLLEIAILVLFAVLFSWVSAGFWTAMMGFLVLAKGGDRHLISRSAAPDAPLAPDARTAVIMPICNEDVTRVFAGLRATYESLGRTGHLANFDFIVLSDSGNPDLRTAEVDAWMEVCRAVGGFGRIFYRWRRHRVKRKTGNVADFCRRWGSKYRYMVVLDADSVMSGDCLATLVRLMEANPGAGIIQTSPLAVGRETLYARVQQFATRVYGPLFTAGLHYWQLGESHYWGHNAIIRVKPFMEHCALAPLPGRGPLSGEILSHDFVEAALMRRAGWGVWIAYDLHGSYEELPPNLLDEVKRDRRWCQGNLMNFRLWLKQGFHMVHRAVFLTGIMAYLSAPLWFLFLLLSTAMLARHALVPPEYFTQPYQLFPTWPEWHPEKALALFSATATLLFLPKVASILLLVRQARQYGGLPRLVMSMLIEVVLSALLAPTRMLFHTKFVIAAYSGWGISWKSPPREDAETTWGEAVRRHGSHTLLGLAWGALVYWLNPSFVLWLLPIVGSLALSIPLSVMLSRVSFGRASREAGLFMIPEEALPPREIVETQQHVEQATETPNFVDAVVDPVTNALMCATASARVVQPASAKERHAALVQHALTGGPRALTASQRHILLGDPFALSKLHELVWGSPLADAGWKNIRLLVRRAPNVLPLRPRVA.

Disordered stretches follow at residues arginine 65–arginine 89 and alanine 101–proline 129. Composition is skewed to basic and acidic residues over residues serine 67–threonine 76 and leucine 105–valine 114. 6 consecutive transmembrane segments (helical) span residues phenylalanine 181 to leucine 201, leucine 208 to phenylalanine 228, valine 532 to leucine 552, leucine 589 to valine 609, glycine 616 to alanine 636, and phenylalanine 698 to methionine 718.

It belongs to the glycosyltransferase 2 family. OpgH subfamily.

The protein resides in the cell inner membrane. It functions in the pathway glycan metabolism; osmoregulated periplasmic glucan (OPG) biosynthesis. In terms of biological role, involved in the biosynthesis of osmoregulated periplasmic glucans (OPGs). This chain is Glucans biosynthesis glucosyltransferase H, found in Cupriavidus pinatubonensis (strain JMP 134 / LMG 1197) (Cupriavidus necator (strain JMP 134)).